The primary structure comprises 416 residues: Tyrosine--tRNA ligase (416 aa).

Tyr39 contacts L-tyrosine. The 'HIGH' region signature appears at Cys44–Ser53. Residues Tyr176 and Gln180 each contribute to the L-tyrosine site. The 'KMSKS' region signature appears at Lys236–Thr240. Lys239 provides a ligand contact to ATP. In terms of domain architecture, S4 RNA-binding spans Ile349–Val415.

It belongs to the class-I aminoacyl-tRNA synthetase family. TyrS type 1 subfamily. In terms of assembly, homodimer.

It is found in the cytoplasm. It carries out the reaction tRNA(Tyr) + L-tyrosine + ATP = L-tyrosyl-tRNA(Tyr) + AMP + diphosphate + H(+). Its function is as follows. Catalyzes the attachment of tyrosine to tRNA(Tyr) in a two-step reaction: tyrosine is first activated by ATP to form Tyr-AMP and then transferred to the acceptor end of tRNA(Tyr). The polypeptide is Tyrosine--tRNA ligase (Wolbachia sp. subsp. Brugia malayi (strain TRS)).